The sequence spans 131 residues: Small ribosomal subunit protein uS8 (131 aa).

This sequence belongs to the universal ribosomal protein uS8 family. In terms of assembly, part of the 30S ribosomal subunit. Contacts proteins S5 and S12.

In terms of biological role, one of the primary rRNA binding proteins, it binds directly to 16S rRNA central domain where it helps coordinate assembly of the platform of the 30S subunit. The protein is Small ribosomal subunit protein uS8 of Ruthia magnifica subsp. Calyptogena magnifica.